We begin with the raw amino-acid sequence, 119 residues long: Auxin-responsive protein SAUR78 (119 aa).

It belongs to the ARG7 family.

In terms of biological role, may be involved in the regulation of ethylene receptor signaling. Promotes cell expansion and plant growth. The protein is Auxin-responsive protein SAUR78 of Arabidopsis thaliana (Mouse-ear cress).